The sequence spans 233 residues: Biosynthetic peptidoglycan transglycosylase (233 aa).

A helical membrane pass occupies residues 17–37; that stretch reads IVLAVLALVILPYALIFFYVL.

The protein belongs to the glycosyltransferase 51 family.

Its subcellular location is the cell inner membrane. The enzyme catalyses [GlcNAc-(1-&gt;4)-Mur2Ac(oyl-L-Ala-gamma-D-Glu-L-Lys-D-Ala-D-Ala)](n)-di-trans,octa-cis-undecaprenyl diphosphate + beta-D-GlcNAc-(1-&gt;4)-Mur2Ac(oyl-L-Ala-gamma-D-Glu-L-Lys-D-Ala-D-Ala)-di-trans,octa-cis-undecaprenyl diphosphate = [GlcNAc-(1-&gt;4)-Mur2Ac(oyl-L-Ala-gamma-D-Glu-L-Lys-D-Ala-D-Ala)](n+1)-di-trans,octa-cis-undecaprenyl diphosphate + di-trans,octa-cis-undecaprenyl diphosphate + H(+). It participates in cell wall biogenesis; peptidoglycan biosynthesis. In terms of biological role, peptidoglycan polymerase that catalyzes glycan chain elongation from lipid-linked precursors. In Rhizobium leguminosarum bv. trifolii (strain WSM2304), this protein is Biosynthetic peptidoglycan transglycosylase.